A 141-amino-acid polypeptide reads, in one-letter code: Terrelysin (141 aa).

It belongs to the aegerolysin family.

It is found in the cytoplasm. Functionally, hemolysins are potential virulence factors. Has hemolytic activity against sheep erythrocytes in vitro. This is Terrelysin from Aspergillus terreus (strain NIH 2624 / FGSC A1156).